The primary structure comprises 736 residues: Catalase-peroxidase (736 aa).

Residues 1 to 10 (MDAKTDDKGA) are compositionally biased toward basic and acidic residues. Residues 1–26 (MDAKTDDKGAGKCPFSGGSHGHRNRD) are disordered. The segment at residues 96–218 (WHSAGTYRIT…LGAVQMGLIY (123 aa)) is a cross-link (tryptophyl-tyrosyl-methioninium (Trp-Tyr) (with M-244)). The active-site Proton acceptor is H97. The segment at residues 218-244 (YVNPEGPNGNPDPVAAAKDIRETFARM) is a cross-link (tryptophyl-tyrosyl-methioninium (Tyr-Met) (with W-96)). H259 contacts heme b.

This sequence belongs to the peroxidase family. Peroxidase/catalase subfamily. Homodimer or homotetramer. Requires heme b as cofactor. Post-translationally, formation of the three residue Trp-Tyr-Met cross-link is important for the catalase, but not the peroxidase activity of the enzyme.

The enzyme catalyses H2O2 + AH2 = A + 2 H2O. The catalysed reaction is 2 H2O2 = O2 + 2 H2O. Functionally, bifunctional enzyme with both catalase and broad-spectrum peroxidase activity. The polypeptide is Catalase-peroxidase (Rhodopseudomonas palustris (strain ATCC BAA-98 / CGA009)).